The sequence spans 254 residues: Mannose-binding protein (254 aa).

The N-terminal stretch at 1 to 19 is a signal peptide; sequence MTLLQPFSALLLCLSLMMA. Positions 46 to 99 are disordered; it reads NGLPGRDGRDGPKGEKGDPGEGLRGLQGLPGKAGPQGLKGEVGPQGEKGQKGER. A compositionally biased stretch (basic and acidic residues) spans 51 to 66; sequence RDGRDGPKGEKGDPGE. Pro57 carries the post-translational modification 4-hydroxyproline. Residues Lys58 and Lys61 each carry the 5-hydroxylysine modification. Residues Lys58 and Lys61 are each glycosylated (O-linked (Gal...) hydroxylysine). Pro75 carries the post-translational modification 4-hydroxyproline. Residues Lys93 and Lys96 each carry the 5-hydroxylysine modification. Residues 140–250 form the C-type lectin domain; the sequence is VGKKMFVSTG…LDCSNSNIFI (111 aa). Intrachain disulfides connect Cys161/Cys252 and Cys229/Cys243.

In terms of assembly, oligomeric complex of 3 or more homotrimers.

The protein localises to the secreted. Functionally, calcium-dependent lectin involved in innate immune defense. Binds mannose, fucose and N-acetylglucosamine on different microorganisms and activates the lectin complement pathway. This Gallus gallus (Chicken) protein is Mannose-binding protein.